We begin with the raw amino-acid sequence, 187 residues long: Large ribosomal subunit protein uL6 (187 aa).

The protein belongs to the universal ribosomal protein uL6 family. As to quaternary structure, part of the 50S ribosomal subunit.

Its function is as follows. This protein binds to the 23S rRNA, and is important in its secondary structure. It is located near the subunit interface in the base of the L7/L12 stalk, and near the tRNA binding site of the peptidyltransferase center. The chain is Large ribosomal subunit protein uL6 from Chloroflexus aggregans (strain MD-66 / DSM 9485).